The sequence spans 225 residues: 3-dehydroquinate dehydratase (225 aa).

3-dehydroquinate contacts are provided by residues 30-32 (EWR) and Arg62. Catalysis depends on His118, which acts as the Proton donor/acceptor. Lys143 functions as the Schiff-base intermediate with substrate in the catalytic mechanism. 3-dehydroquinate is bound by residues Arg186, Ser205, and Gln209.

Belongs to the type-I 3-dehydroquinase family. As to quaternary structure, homodimer.

It catalyses the reaction 3-dehydroquinate = 3-dehydroshikimate + H2O. The protein operates within metabolic intermediate biosynthesis; chorismate biosynthesis; chorismate from D-erythrose 4-phosphate and phosphoenolpyruvate: step 3/7. Functionally, involved in the third step of the chorismate pathway, which leads to the biosynthesis of aromatic amino acids. Catalyzes the cis-dehydration of 3-dehydroquinate (DHQ) and introduces the first double bond of the aromatic ring to yield 3-dehydroshikimate. This Streptococcus mutans serotype c (strain ATCC 700610 / UA159) protein is 3-dehydroquinate dehydratase.